Here is a 1509-residue protein sequence, read N- to C-terminus: Dynein axonemal assembly factor 1 homolog (1509 aa).

6 LRR repeats span residues Arg-34–Thr-56, Glu-57–Ser-78, Lys-79–Arg-100, Glu-101–Ile-122, Val-125–Val-146, and Thr-150–Glu-171. Residues Pro-185–Trp-223 enclose the LRRCT domain. Disordered stretches follow at residues Cys-252–Cys-280, His-306–Ser-327, Ser-962–Asn-1008, and Thr-1103–Asn-1122. Positions Ser-309–Ser-318 are enriched in low complexity. Residues Ser-978–Tyr-990 show a composition bias toward acidic residues. Residues Thr-1103 to Gly-1112 show a composition bias toward polar residues.

The protein belongs to the DNAAF1 family.

Its subcellular location is the cell projection. It localises to the cilium. Its function is as follows. Cilium-specific protein required for cilia structures. The polypeptide is Dynein axonemal assembly factor 1 homolog (dtr) (Drosophila yakuba (Fruit fly)).